Here is a 336-residue protein sequence, read N- to C-terminus: Holliday junction branch migration complex subunit RuvB (336 aa).

Positions 1 to 185 (MSIIVERLLS…FGVLSRVEYY (185 aa)) are large ATPase domain (RuvB-L). ATP contacts are provided by residues Leu24, Arg25, Gly66, Lys69, Thr70, Thr71, 132–134 (EDF), Arg175, Tyr185, and Arg222. Residue Thr70 coordinates Mg(2+). The segment at 186-256 (TVDQLSAIVE…ITQMALELLQ (71 aa)) is small ATPAse domain (RuvB-S). Residues 259-336 (KLGLDHIDHK…EHFGMEIPKV (78 aa)) are head domain (RuvB-H). Residues Arg314 and Arg319 each coordinate DNA.

The protein belongs to the RuvB family. In terms of assembly, homohexamer. Forms an RuvA(8)-RuvB(12)-Holliday junction (HJ) complex. HJ DNA is sandwiched between 2 RuvA tetramers; dsDNA enters through RuvA and exits via RuvB. An RuvB hexamer assembles on each DNA strand where it exits the tetramer. Each RuvB hexamer is contacted by two RuvA subunits (via domain III) on 2 adjacent RuvB subunits; this complex drives branch migration. In the full resolvosome a probable DNA-RuvA(4)-RuvB(12)-RuvC(2) complex forms which resolves the HJ.

The protein resides in the cytoplasm. It catalyses the reaction ATP + H2O = ADP + phosphate + H(+). In terms of biological role, the RuvA-RuvB-RuvC complex processes Holliday junction (HJ) DNA during genetic recombination and DNA repair, while the RuvA-RuvB complex plays an important role in the rescue of blocked DNA replication forks via replication fork reversal (RFR). RuvA specifically binds to HJ cruciform DNA, conferring on it an open structure. The RuvB hexamer acts as an ATP-dependent pump, pulling dsDNA into and through the RuvAB complex. RuvB forms 2 homohexamers on either side of HJ DNA bound by 1 or 2 RuvA tetramers; 4 subunits per hexamer contact DNA at a time. Coordinated motions by a converter formed by DNA-disengaged RuvB subunits stimulates ATP hydrolysis and nucleotide exchange. Immobilization of the converter enables RuvB to convert the ATP-contained energy into a lever motion, pulling 2 nucleotides of DNA out of the RuvA tetramer per ATP hydrolyzed, thus driving DNA branch migration. The RuvB motors rotate together with the DNA substrate, which together with the progressing nucleotide cycle form the mechanistic basis for DNA recombination by continuous HJ branch migration. Branch migration allows RuvC to scan DNA until it finds its consensus sequence, where it cleaves and resolves cruciform DNA. This Bacillus cereus (strain ATCC 14579 / DSM 31 / CCUG 7414 / JCM 2152 / NBRC 15305 / NCIMB 9373 / NCTC 2599 / NRRL B-3711) protein is Holliday junction branch migration complex subunit RuvB.